Reading from the N-terminus, the 350-residue chain is Holliday junction branch migration complex subunit RuvB (350 aa).

The large ATPase domain (RuvB-L) stretch occupies residues 1 to 183 (MSAERLVNPH…FVAVHRLVFY (183 aa)). Residues Leu-22, Arg-23, Gly-64, Lys-67, Thr-68, Ser-69, 130 to 132 (EDF), Arg-173, Tyr-183, and Arg-220 contribute to the ATP site. Thr-68 contacts Mg(2+). Positions 184–254 (SDAAMTEIVS…VAREALAQLE (71 aa)) are small ATPAse domain (RuvB-S). Residues 257-350 (ELGLDENDRR…ESGPQQGTLF (94 aa)) are head domain (RuvB-H). Residues Arg-312 and Arg-317 each coordinate DNA.

It belongs to the RuvB family. In terms of assembly, homohexamer. Forms an RuvA(8)-RuvB(12)-Holliday junction (HJ) complex. HJ DNA is sandwiched between 2 RuvA tetramers; dsDNA enters through RuvA and exits via RuvB. An RuvB hexamer assembles on each DNA strand where it exits the tetramer. Each RuvB hexamer is contacted by two RuvA subunits (via domain III) on 2 adjacent RuvB subunits; this complex drives branch migration. In the full resolvosome a probable DNA-RuvA(4)-RuvB(12)-RuvC(2) complex forms which resolves the HJ.

The protein localises to the cytoplasm. It carries out the reaction ATP + H2O = ADP + phosphate + H(+). Its function is as follows. The RuvA-RuvB-RuvC complex processes Holliday junction (HJ) DNA during genetic recombination and DNA repair, while the RuvA-RuvB complex plays an important role in the rescue of blocked DNA replication forks via replication fork reversal (RFR). RuvA specifically binds to HJ cruciform DNA, conferring on it an open structure. The RuvB hexamer acts as an ATP-dependent pump, pulling dsDNA into and through the RuvAB complex. RuvB forms 2 homohexamers on either side of HJ DNA bound by 1 or 2 RuvA tetramers; 4 subunits per hexamer contact DNA at a time. Coordinated motions by a converter formed by DNA-disengaged RuvB subunits stimulates ATP hydrolysis and nucleotide exchange. Immobilization of the converter enables RuvB to convert the ATP-contained energy into a lever motion, pulling 2 nucleotides of DNA out of the RuvA tetramer per ATP hydrolyzed, thus driving DNA branch migration. The RuvB motors rotate together with the DNA substrate, which together with the progressing nucleotide cycle form the mechanistic basis for DNA recombination by continuous HJ branch migration. Branch migration allows RuvC to scan DNA until it finds its consensus sequence, where it cleaves and resolves cruciform DNA. The polypeptide is Holliday junction branch migration complex subunit RuvB (Chloroflexus aggregans (strain MD-66 / DSM 9485)).